Consider the following 471-residue polypeptide: UDP-N-acetylmuramate--L-alanine ligase (471 aa).

114-120 (GTHGKTT) lines the ATP pocket.

This sequence belongs to the MurCDEF family.

It localises to the cytoplasm. It catalyses the reaction UDP-N-acetyl-alpha-D-muramate + L-alanine + ATP = UDP-N-acetyl-alpha-D-muramoyl-L-alanine + ADP + phosphate + H(+). It participates in cell wall biogenesis; peptidoglycan biosynthesis. Cell wall formation. This is UDP-N-acetylmuramate--L-alanine ligase from Methylobacterium sp. (strain 4-46).